Consider the following 280-residue polypeptide: Hemin import ATP-binding protein HmuV (280 aa).

Residues 26-260 (LAAAGGLRVH…GLLSEVYDQP (235 aa)) form the ABC transporter domain. 59 to 66 (GPNGAGKS) contributes to the ATP binding site.

It belongs to the ABC transporter superfamily. Heme (hemin) importer (TC 3.A.1.14.5) family. The complex is composed of two ATP-binding proteins (HmuV), two transmembrane proteins (HmuU) and a solute-binding protein (HmuT).

It localises to the cell membrane. Part of the ABC transporter complex HmuTUV involved in hemin import. Responsible for energy coupling to the transport system. The sequence is that of Hemin import ATP-binding protein HmuV from Streptomyces coelicolor (strain ATCC BAA-471 / A3(2) / M145).